The primary structure comprises 218 residues: Protein N-lysine methyltransferase METTL21A (218 aa).

S-adenosyl-L-methionine is bound by residues Trp-47, 73 to 75, Asp-94, Trp-125, and Ala-143; that span reads GAG.

It belongs to the methyltransferase superfamily. METTL21 family. Interacts with heat shock protein 70 family members; at least some of these proteins are methylation substrates.

It is found in the cytoplasm. It catalyses the reaction L-lysyl-[protein] + 3 S-adenosyl-L-methionine = N(6),N(6),N(6)-trimethyl-L-lysyl-[protein] + 3 S-adenosyl-L-homocysteine + 3 H(+). Its function is as follows. Protein-lysine methyltransferase that selectively trimethylates residues in heat shock protein 70 (HSP70) family members. Contributes to the in vivo trimethylation of Lys residues in HSPA1 and HSPA8. In vitro methylates 'Lys-561' in HSPA1, 'Lys-564' in HSPA2, 'Lys-585' in HSPA5, 'Lys-563' in HSPA6 and 'Lys-561' in HSPA8. The protein is Protein N-lysine methyltransferase METTL21A (METTL21A) of Homo sapiens (Human).